Reading from the N-terminus, the 716-residue chain is Fatty acid oxidation complex subunit alpha (716 aa).

The enoyl-CoA hydratase/isomerase stretch occupies residues Met1 to Ala189. Asp296 lines the substrate pocket. Positions Lys311–Ser716 are 3-hydroxyacyl-CoA dehydrogenase. Residues Met324, Asp343, Val400–Glu402, Lys407, and Ser429 each bind NAD(+). The For 3-hydroxyacyl-CoA dehydrogenase activity role is filled by His450. An NAD(+)-binding site is contributed by Asn453. Asn500 is a substrate binding site.

This sequence in the N-terminal section; belongs to the enoyl-CoA hydratase/isomerase family. It in the C-terminal section; belongs to the 3-hydroxyacyl-CoA dehydrogenase family. As to quaternary structure, heterotetramer of two alpha chains (FadB) and two beta chains (FadA).

It carries out the reaction a (3S)-3-hydroxyacyl-CoA + NAD(+) = a 3-oxoacyl-CoA + NADH + H(+). It catalyses the reaction a (3S)-3-hydroxyacyl-CoA = a (2E)-enoyl-CoA + H2O. The enzyme catalyses a 4-saturated-(3S)-3-hydroxyacyl-CoA = a (3E)-enoyl-CoA + H2O. The catalysed reaction is (3S)-3-hydroxybutanoyl-CoA = (3R)-3-hydroxybutanoyl-CoA. It carries out the reaction a (3Z)-enoyl-CoA = a 4-saturated (2E)-enoyl-CoA. It catalyses the reaction a (3E)-enoyl-CoA = a 4-saturated (2E)-enoyl-CoA. It functions in the pathway lipid metabolism; fatty acid beta-oxidation. Its function is as follows. Involved in the aerobic and anaerobic degradation of long-chain fatty acids via beta-oxidation cycle. Catalyzes the formation of 3-oxoacyl-CoA from enoyl-CoA via L-3-hydroxyacyl-CoA. It can also use D-3-hydroxyacyl-CoA and cis-3-enoyl-CoA as substrate. The protein is Fatty acid oxidation complex subunit alpha of Shewanella sediminis (strain HAW-EB3).